The chain runs to 309 residues: Syndecan-1 (309 aa).

The signal sequence occupies residues Met1–Pro22. Residues Gln23 to Gly253 are Extracellular-facing. Disordered regions lie at residues Asn28–Leu57 and Thr145–Ser185. Residues Glu32 to Asp42 are compositionally biased toward acidic residues. O-linked (Xyl...) (chondroitin sulfate) serine glycosylation occurs at Ser37. N-linked (GlcNAc...) asparagine glycosylation occurs at Asn43. Ser45 and Ser47 each carry an O-linked (Xyl...) (heparan sulfate) serine glycan. A compositionally biased stretch (low complexity) spans Gly173 to Gly183. 2 O-linked (Xyl...) (chondroitin sulfate) serine glycosylation sites follow: Ser205 and Ser215. A helical membrane pass occupies residues Gly254–Leu274. Residues Tyr275–Ala309 lie on the Cytoplasmic side of the membrane. Residues Gly283–Ala309 are disordered. Position 284 is a phosphoserine (Ser284).

This sequence belongs to the syndecan proteoglycan family. Interacts with CDCP1. Interacts (via C-terminus) with TIAM1 (via PDZ domain). Interacts with MDK. Post-translationally, shedding is enhanced by a number of factors such as heparanase, thrombin or EGF. Also by stress and wound healing. PMA-mediated shedding is inhibited by TIMP3.

The protein resides in the membrane. It localises to the secreted. The protein localises to the extracellular exosome. Functionally, cell surface proteoglycan that contains both heparan sulfate and chondroitin sulfate and that links the cytoskeleton to the interstitial matrix. Regulates exosome biogenesis in concert with SDCBP and PDCD6IP. Able to induce its own expression in dental mesenchymal cells and also in the neighboring dental epithelial cells via an MSX1-mediated pathway. This chain is Syndecan-1, found in Mesocricetus auratus (Golden hamster).